The chain runs to 303 residues: Aliphatic sulfonates import ATP-binding protein SsuB (303 aa).

Positions 39-263 constitute an ABC transporter domain; sequence LHVRQVVKRY…ERGAAGFAQL (225 aa). An ATP-binding site is contributed by 71–78; the sequence is GRSGCGKS.

Belongs to the ABC transporter superfamily. Aliphatic sulfonates importer (TC 3.A.1.17.2) family. As to quaternary structure, the complex is composed of two ATP-binding proteins (SsuB), two transmembrane proteins (SsuC) and a solute-binding protein (SsuA).

It localises to the cell inner membrane. It carries out the reaction ATP + H2O + aliphatic sulfonate-[sulfonate-binding protein]Side 1 = ADP + phosphate + aliphatic sulfonateSide 2 + [sulfonate-binding protein]Side 1.. Its function is as follows. Part of the ABC transporter complex SsuABC involved in aliphatic sulfonates import. Responsible for energy coupling to the transport system. In Cupriavidus necator (strain ATCC 17699 / DSM 428 / KCTC 22496 / NCIMB 10442 / H16 / Stanier 337) (Ralstonia eutropha), this protein is Aliphatic sulfonates import ATP-binding protein SsuB.